The sequence spans 324 residues: tRNA U34 carboxymethyltransferase (324 aa).

Residues lysine 92, tryptophan 106, lysine 111, glycine 131, 153-155 (DPT), 182-183 (IE), methionine 197, tyrosine 201, and arginine 316 each bind carboxy-S-adenosyl-L-methionine.

Belongs to the class I-like SAM-binding methyltransferase superfamily. CmoB family. In terms of assembly, homotetramer.

It catalyses the reaction carboxy-S-adenosyl-L-methionine + 5-hydroxyuridine(34) in tRNA = 5-carboxymethoxyuridine(34) in tRNA + S-adenosyl-L-homocysteine + H(+). In terms of biological role, catalyzes carboxymethyl transfer from carboxy-S-adenosyl-L-methionine (Cx-SAM) to 5-hydroxyuridine (ho5U) to form 5-carboxymethoxyuridine (cmo5U) at position 34 in tRNAs. In Proteus mirabilis (strain HI4320), this protein is tRNA U34 carboxymethyltransferase.